Reading from the N-terminus, the 443-residue chain is Thymidine phosphorylase (443 aa).

Belongs to the thymidine/pyrimidine-nucleoside phosphorylase family. In terms of assembly, homodimer.

The catalysed reaction is thymidine + phosphate = 2-deoxy-alpha-D-ribose 1-phosphate + thymine. Its pathway is pyrimidine metabolism; dTMP biosynthesis via salvage pathway; dTMP from thymine: step 1/2. In terms of biological role, the enzymes which catalyze the reversible phosphorolysis of pyrimidine nucleosides are involved in the degradation of these compounds and in their utilization as carbon and energy sources, or in the rescue of pyrimidine bases for nucleotide synthesis. In Aliivibrio salmonicida (strain LFI1238) (Vibrio salmonicida (strain LFI1238)), this protein is Thymidine phosphorylase.